The sequence spans 235 residues: MKDELFKQSPKKQFEFDKSVASVFDDMINRSVPFYRENLELCGNLLAKILPINASICDLGCSSANFLIFLANLRKDFKLFGVDNSASMVEVAKSKAKAYGLDISFFETNLCEFDFFVCDVFVANYTMQFIRPPKRQELLDKIYKNLNSKGILIMSEKILYEDAFLSKNIIELYADYKEKQGYSKFEIAAKREALENVLIPYSQKENLNMLEKAGFKKIESIFKWANFETFIAFKD.

S-adenosyl-L-methionine-binding positions include Tyr35, 60-62 (GCS), 83-84 (DN), Asn124, and Arg191.

Belongs to the class I-like SAM-binding methyltransferase superfamily. Cx-SAM synthase family. As to quaternary structure, homodimer.

The enzyme catalyses prephenate + S-adenosyl-L-methionine = carboxy-S-adenosyl-L-methionine + 3-phenylpyruvate + H2O. Functionally, catalyzes the conversion of S-adenosyl-L-methionine (SAM) to carboxy-S-adenosyl-L-methionine (Cx-SAM). This is Carboxy-S-adenosyl-L-methionine synthase from Campylobacter jejuni subsp. jejuni serotype O:6 (strain 81116 / NCTC 11828).